Consider the following 389-residue polypeptide: D(-)-tartrate dehydratase (389 aa).

Substrate-binding positions include asparagine 21, asparagine 55, lysine 102, tyrosine 156, lysine 182, 182–184 (KMK), 213–215 (DAN), glutamate 239, glutamate 265, histidine 322, and 341–343 (ESY). The active-site acceptor is lysine 184. Mg(2+) contacts are provided by aspartate 213, glutamate 239, and glutamate 265. The Proton donor/acceptor role is filled by histidine 322.

This sequence belongs to the mandelate racemase/muconate lactonizing enzyme family. As to quaternary structure, homooctamer; tetramer of dimers. Requires Mg(2+) as cofactor.

It catalyses the reaction (S,S)-tartrate = oxaloacetate + H2O. Its function is as follows. Catalyzes the dehydration of D-tartrate to oxaloacetate. The chain is D(-)-tartrate dehydratase (tarD) from Bradyrhizobium diazoefficiens (strain JCM 10833 / BCRC 13528 / IAM 13628 / NBRC 14792 / USDA 110).